The sequence spans 491 residues: UDP-N-acetylmuramoyl-L-alanyl-D-glutamate--2,6-diaminopimelate ligase (491 aa).

Residue Ser30 coordinates UDP-N-acetyl-alpha-D-muramoyl-L-alanyl-D-glutamate. Residue 108 to 114 (GTNGKTT) coordinates ATP. UDP-N-acetyl-alpha-D-muramoyl-L-alanyl-D-glutamate is bound by residues Asn149, 150-151 (TT), Ser177, Gln183, and Arg185. An N6-carboxylysine modification is found at Lys217. Meso-2,6-diaminopimelate contacts are provided by residues Arg383, 407 to 410 (DNPR), Gly458, and Glu462. The Meso-diaminopimelate recognition motif signature appears at 407–410 (DNPR).

The protein belongs to the MurCDEF family. MurE subfamily. Requires Mg(2+) as cofactor. Carboxylation is probably crucial for Mg(2+) binding and, consequently, for the gamma-phosphate positioning of ATP.

It is found in the cytoplasm. The enzyme catalyses UDP-N-acetyl-alpha-D-muramoyl-L-alanyl-D-glutamate + meso-2,6-diaminopimelate + ATP = UDP-N-acetyl-alpha-D-muramoyl-L-alanyl-gamma-D-glutamyl-meso-2,6-diaminopimelate + ADP + phosphate + H(+). The protein operates within cell wall biogenesis; peptidoglycan biosynthesis. Functionally, catalyzes the addition of meso-diaminopimelic acid to the nucleotide precursor UDP-N-acetylmuramoyl-L-alanyl-D-glutamate (UMAG) in the biosynthesis of bacterial cell-wall peptidoglycan. The polypeptide is UDP-N-acetylmuramoyl-L-alanyl-D-glutamate--2,6-diaminopimelate ligase (Listeria monocytogenes serotype 4b (strain F2365)).